A 431-amino-acid polypeptide reads, in one-letter code: Tyrosine--tRNA ligase (431 aa).

An L-tyrosine-binding site is contributed by Tyr34. The short motif at 39–48 (PTADSLHIGH) is the 'HIGH' region element. The L-tyrosine site is built by Tyr171 and Gln175. The 'KMSKS' region signature appears at 231-235 (KFGKT). Lys234 is a binding site for ATP. Residues 353–422 (INVVEALVKT…GKYTILRRGK (70 aa)) form the S4 RNA-binding domain.

The protein belongs to the class-I aminoacyl-tRNA synthetase family. TyrS type 1 subfamily. As to quaternary structure, homodimer.

The protein localises to the cytoplasm. It catalyses the reaction tRNA(Tyr) + L-tyrosine + ATP = L-tyrosyl-tRNA(Tyr) + AMP + diphosphate + H(+). Its function is as follows. Catalyzes the attachment of tyrosine to tRNA(Tyr) in a two-step reaction: tyrosine is first activated by ATP to form Tyr-AMP and then transferred to the acceptor end of tRNA(Tyr). In Neisseria meningitidis serogroup C / serotype 2a (strain ATCC 700532 / DSM 15464 / FAM18), this protein is Tyrosine--tRNA ligase.